A 642-amino-acid polypeptide reads, in one-letter code: 1-deoxy-D-xylulose-5-phosphate synthase 2 (642 aa).

Thiamine diphosphate contacts are provided by residues His-79 and 120 to 122 (AHS). Asp-155 serves as a coordination point for Mg(2+). Residues 156 to 157 (GS), Asn-184, Tyr-293, and Glu-375 each bind thiamine diphosphate. Residue Asn-184 coordinates Mg(2+).

Belongs to the transketolase family. DXPS subfamily. Homodimer. The cofactor is Mg(2+). Thiamine diphosphate serves as cofactor.

The enzyme catalyses D-glyceraldehyde 3-phosphate + pyruvate + H(+) = 1-deoxy-D-xylulose 5-phosphate + CO2. It functions in the pathway metabolic intermediate biosynthesis; 1-deoxy-D-xylulose 5-phosphate biosynthesis; 1-deoxy-D-xylulose 5-phosphate from D-glyceraldehyde 3-phosphate and pyruvate: step 1/1. Catalyzes the acyloin condensation reaction between C atoms 2 and 3 of pyruvate and glyceraldehyde 3-phosphate to yield 1-deoxy-D-xylulose-5-phosphate (DXP). This is 1-deoxy-D-xylulose-5-phosphate synthase 2 from Roseobacter denitrificans (strain ATCC 33942 / OCh 114) (Erythrobacter sp. (strain OCh 114)).